The primary structure comprises 415 residues: MTGTLTEKILSRASGKTVSPGDVIEAKTDIVAFHDLTGYHVIEVMEKANMMKIFDKTKIVVAFDHLAPPPDVRSAEIQGNIRKFVKEMRLPNFHDINVGILHELLIEQYALPGQVIVAADSHTTTSGAVGAFAQGMGASDVAAAVITGKTWLVVPQPFKVTLKGNPGKWINGKDVALELLGKFKADYFNGMSIEVHVENPKAFPMDYRATVSNMGIEMNADALMFVPDVETKDYIKTMRGKEVELVTPDPGAKYLDEHTIELDKLEPLVAAPYSVDNVKTAREESKVPVDQVYIGSCTNGRLSDFRIASEILKGKKVKTRCIAIPSSYTMFKQAMEMGYIEDLVNAGCVVTYGTCGPCLGGHFGVAGPGEVIVSTSSRNFRGRMGSNEAKVYLSGPSVAAASAATGYITDPRDVQ.

Residues Cys-297, Cys-355, and Cys-358 each coordinate [4Fe-4S] cluster.

The protein belongs to the aconitase/IPM isomerase family. LeuC type 2 subfamily. In terms of assembly, heterodimer of LeuC and LeuD. [4Fe-4S] cluster serves as cofactor.

The catalysed reaction is (2R,3S)-3-isopropylmalate = (2S)-2-isopropylmalate. Its pathway is amino-acid biosynthesis; L-leucine biosynthesis; L-leucine from 3-methyl-2-oxobutanoate: step 2/4. In terms of biological role, catalyzes the isomerization between 2-isopropylmalate and 3-isopropylmalate, via the formation of 2-isopropylmaleate. The polypeptide is 3-isopropylmalate dehydratase large subunit (Metallosphaera sedula (strain ATCC 51363 / DSM 5348 / JCM 9185 / NBRC 15509 / TH2)).